Consider the following 234-residue polypeptide: MRLVQLSRHNIAFPSPEGALREPNGLLALGGDLSPARLLMAYQRGIFPWFSPGDPILWWSPDPRAILEPSQFHLSRSMKRFHAKSPYRVTLNYAFGQVIEGCAADRDEGTWITHDIINAYLRLHELGYAHSIEVWDNDTLVGGMYGVAQGTLFCGESMFSRAVNASKTALLVFCQEFSLRGGQLMDCQVLNEHTASLGAVEITRRHYLDELGNLRQQKLPQNFWVPRTLFMPQV.

The protein belongs to the L/F-transferase family.

Its subcellular location is the cytoplasm. The catalysed reaction is N-terminal L-lysyl-[protein] + L-leucyl-tRNA(Leu) = N-terminal L-leucyl-L-lysyl-[protein] + tRNA(Leu) + H(+). It carries out the reaction N-terminal L-arginyl-[protein] + L-leucyl-tRNA(Leu) = N-terminal L-leucyl-L-arginyl-[protein] + tRNA(Leu) + H(+). The enzyme catalyses L-phenylalanyl-tRNA(Phe) + an N-terminal L-alpha-aminoacyl-[protein] = an N-terminal L-phenylalanyl-L-alpha-aminoacyl-[protein] + tRNA(Phe). Functions in the N-end rule pathway of protein degradation where it conjugates Leu, Phe and, less efficiently, Met from aminoacyl-tRNAs to the N-termini of proteins containing an N-terminal arginine or lysine. This is Leucyl/phenylalanyl-tRNA--protein transferase from Enterobacter sp. (strain 638).